The following is a 391-amino-acid chain: Phosphoglycerate kinase (391 aa).

Residues 21-23, R36, 59-62, R113, and R146 contribute to the substrate site; these read DFN and HLGR. Residues K197, E319, and 345-348 each bind ATP; that span reads GGDT.

The protein belongs to the phosphoglycerate kinase family. In terms of assembly, monomer.

The protein resides in the cytoplasm. The catalysed reaction is (2R)-3-phosphoglycerate + ATP = (2R)-3-phospho-glyceroyl phosphate + ADP. It participates in carbohydrate degradation; glycolysis; pyruvate from D-glyceraldehyde 3-phosphate: step 2/5. The protein is Phosphoglycerate kinase of Methylococcus capsulatus (strain ATCC 33009 / NCIMB 11132 / Bath).